A 53-amino-acid chain; its full sequence is Lectin alpha chain (53 aa).

This sequence belongs to the leguminous lectin family. In terms of assembly, tetramer of two alpha and two beta chains.

This chain is Lectin alpha chain, found in Lathyrus clymenum (Spanish vetchling).